Reading from the N-terminus, the 341-residue chain is Biotin synthase (341 aa).

A Radical SAM core domain is found at Ala-40–Arg-267. Residues Cys-55, Cys-59, and Cys-62 each contribute to the [4Fe-4S] cluster site. Cys-99, Cys-130, Cys-190, and Arg-262 together coordinate [2Fe-2S] cluster.

The protein belongs to the radical SAM superfamily. Biotin synthase family. Homodimer. Requires [4Fe-4S] cluster as cofactor. [2Fe-2S] cluster is required as a cofactor.

The catalysed reaction is (4R,5S)-dethiobiotin + (sulfur carrier)-SH + 2 reduced [2Fe-2S]-[ferredoxin] + 2 S-adenosyl-L-methionine = (sulfur carrier)-H + biotin + 2 5'-deoxyadenosine + 2 L-methionine + 2 oxidized [2Fe-2S]-[ferredoxin]. The protein operates within cofactor biosynthesis; biotin biosynthesis; biotin from 7,8-diaminononanoate: step 2/2. Catalyzes the conversion of dethiobiotin (DTB) to biotin by the insertion of a sulfur atom into dethiobiotin via a radical-based mechanism. The chain is Biotin synthase from Xylella fastidiosa (strain M12).